The sequence spans 922 residues: 1,4-alpha-glucan-branching enzyme 1, chloroplastic/amyloplastic (922 aa).

Residues 1-47 (MVYTISGIRFPVLPSLHKSTLRCDRRASSHSFFLKNNSSSFSRTSLY) constitute a chloroplast transit peptide. The disordered stretch occupies residues 83–130 (LENPDITSEDAQNLEDLTMKDGNKYNIDESTSSYREVGDEKGSVTSSS). Residues 99-109 (LTMKDGNKYNI) are compositionally biased toward basic and acidic residues. Residue Asp494 is the Nucleophile of the active site. Glu549 acts as the Proton donor in catalysis. The disordered stretch occupies residues 870–922 (VESEPIELSVEEAESEPIERSVEEVESETTQQSVEVESETTQQSVEVESETTQ). Residues 897–922 (ETTQQSVEVESETTQQSVEVESETTQ) are compositionally biased toward low complexity.

This sequence belongs to the glycosyl hydrolase 13 family. GlgB subfamily. In terms of assembly, monomer. Expressed in roots, leaves, stipules, pods and flowers.

It localises to the plastid. The protein resides in the chloroplast. It is found in the amyloplast. It catalyses the reaction Transfers a segment of a (1-&gt;4)-alpha-D-glucan chain to a primary hydroxy group in a similar glucan chain.. The protein operates within glycan biosynthesis; starch biosynthesis. Catalyzes the formation of the alpha-1,6-glucosidic linkages in starch by scission of a 1,4-alpha-linked oligosaccharide from growing alpha-1,4-glucan chains and the subsequent attachment of the oligosaccharide to the alpha-1,6 position. May preferentially transfer short chains during branching. Responsible for the synthesis of about 75% of the amylopectin found in the starch granules of mature embryos. This Pisum sativum (Garden pea) protein is 1,4-alpha-glucan-branching enzyme 1, chloroplastic/amyloplastic (SBEI).